Here is a 947-residue protein sequence, read N- to C-terminus: Translation initiation factor IF-2 (947 aa).

Residues 55–361 (TKDAQAGSAK…PVTERKFHEL (307 aa)) form a disordered region. Residues 63 to 73 (AKDKQVAEQKA) show a composition bias toward basic and acidic residues. Positions 76–90 (AKATTPQPAAATQEA) are enriched in low complexity. 3 stretches are compositionally biased toward basic and acidic residues: residues 103 to 116 (FKAE…EQAA), 125 to 134 (SNDRKSDYRQ), and 170 to 183 (NDGH…DKNR). Positions 190 to 204 (RQQDTGRQGQTQAGA) are enriched in low complexity. Basic and acidic residues-rich tracts occupy residues 225–249 (ARQR…RQEA), 257–267 (QTEDKKHREAS), and 294–311 (NRPD…DGQK). The segment covering 316–334 (SWNSQNQVRNQKNSNWNNN) has biased composition (low complexity). The segment covering 335-345 (KKNKKGKHHKN) has biased composition (basic residues). The tr-type G domain occupies 448-617 (ERAPVVTIMG…LLVAEVEELK (170 aa)). The interval 457-464 (GHVDHGKT) is G1. 457-464 (GHVDHGKT) serves as a coordination point for GTP. The segment at 482-486 (GITQH) is G2. The interval 503-506 (DTPG) is G3. Residues 503–507 (DTPGH) and 557–560 (NKID) contribute to the GTP site. The tract at residues 557–560 (NKID) is G4. Positions 593-595 (SAK) are G5.

It belongs to the TRAFAC class translation factor GTPase superfamily. Classic translation factor GTPase family. IF-2 subfamily.

The protein resides in the cytoplasm. In terms of biological role, one of the essential components for the initiation of protein synthesis. Protects formylmethionyl-tRNA from spontaneous hydrolysis and promotes its binding to the 30S ribosomal subunits. Also involved in the hydrolysis of GTP during the formation of the 70S ribosomal complex. The chain is Translation initiation factor IF-2 from Streptococcus equi subsp. zooepidemicus (strain MGCS10565).